The primary structure comprises 314 residues: tRNA dimethylallyltransferase (314 aa).

An ATP-binding site is contributed by 12–19; it reads GPTAGGKS. Residue 14-19 participates in substrate binding; it reads TAGGKS. Residues 37–40 form an interaction with substrate tRNA region; the sequence is DSMQ.

The protein belongs to the IPP transferase family. As to quaternary structure, monomer. It depends on Mg(2+) as a cofactor.

It carries out the reaction adenosine(37) in tRNA + dimethylallyl diphosphate = N(6)-dimethylallyladenosine(37) in tRNA + diphosphate. Functionally, catalyzes the transfer of a dimethylallyl group onto the adenine at position 37 in tRNAs that read codons beginning with uridine, leading to the formation of N6-(dimethylallyl)adenosine (i(6)A). The sequence is that of tRNA dimethylallyltransferase from Rhodospirillum centenum (strain ATCC 51521 / SW).